A 256-amino-acid polypeptide reads, in one-letter code: Major prion protein 2 (256 aa).

The N-terminal stretch at 1–24 (MVKSHIGSWILVLFVAMWSDVALC) is a signal peptide. Positions 25–233 (KKRPKPGGGW…ESEAYYQRGA (209 aa)) are interaction with GRB2, ERI3 and SYN1. Residues 28 to 110 (PKPGGGWNTG…QWNKPSKPKT (83 aa)) form a disordered region. 5 repeat units span residues 54-62 (PQEGGDWGQ), 63-70 (PHGGGWGQ), 71-78 (PHVGGWGQ), 79-86 (PHGGGWGQ), and 87-95 (PHGGGGWGQ). Residues 54–95 (PQEGGDWGQPHGGGWGQPHVGGWGQPHGGGWGQPHGGGGWGQ) form a 5 X 8 AA tandem repeats of P-H-G-G-G-W-G-Q region. The segment covering 58 to 99 (GDWGQPHGGGWGQPHVGGWGQPHGGGWGQPHGGGGWGQGGTH) has biased composition (gly residues). Cu(2+) contacts are provided by His-64, Gly-65, Gly-66, His-72, Gly-74, His-80, Gly-81, Gly-82, His-88, Gly-90, and Gly-91. A disulfide bridge links Cys-182 with Cys-217. Residues Asn-184 and Asn-200 are each glycosylated (N-linked (GlcNAc...) asparagine). Ala-233 carries GPI-anchor amidated alanine lipidation. A propeptide spans 234–256 (SVILFSSPPVILLISFLIFLIVG) (removed in mature form).

It belongs to the prion family. As to quaternary structure, monomer and homodimer. Has a tendency to aggregate into amyloid fibrils containing a cross-beta spine, formed by a steric zipper of superposed beta-strands. Soluble oligomers may represent an intermediate stage on the path to fibril formation. Copper binding may promote oligomerization. Interacts with GRB2, APP, ERI3/PRNPIP and SYN1. Mislocalized cytosolically exposed PrP interacts with MGRN1; this interaction alters MGRN1 subcellular location and causes lysosomal enlargement. Interacts with KIAA1191.

Its subcellular location is the cell membrane. The protein resides in the golgi apparatus. Functionally, its primary physiological function is unclear. Has cytoprotective activity against internal or environmental stresses. May play a role in neuronal development and synaptic plasticity. May be required for neuronal myelin sheath maintenance. May play a role in iron uptake and iron homeostasis. Soluble oligomers are toxic to cultured neuroblastoma cells and induce apoptosis (in vitro). Association with GPC1 (via its heparan sulfate chains) targets PRNP to lipid rafts. Also provides Cu(2+) or Zn(2+) for the ascorbate-mediated GPC1 deaminase degradation of its heparan sulfate side chains. The chain is Major prion protein 2 from Tragelaphus strepsiceros (Greater kudu).